We begin with the raw amino-acid sequence, 195 residues long: Guanylate kinase (195 aa).

One can recognise a Guanylate kinase-like domain in the interval 7–186 (GVLLVLSSPS…SVEEISSILD (180 aa)). Residue 14–21 (SPSGAGKT) coordinates ATP.

Belongs to the guanylate kinase family.

It localises to the cytoplasm. The enzyme catalyses GMP + ATP = GDP + ADP. Essential for recycling GMP and indirectly, cGMP. This chain is Guanylate kinase, found in Wolbachia sp. subsp. Brugia malayi (strain TRS).